Reading from the N-terminus, the 207-residue chain is uncharacterized protein (207 aa).

Belongs to the flavoredoxin family. The cofactor is FMN.

This is an uncharacterized protein from Bacillus subtilis (strain 168).